Consider the following 236-residue polypeptide: Ribosomal RNA large subunit methyltransferase E (236 aa).

S-adenosyl-L-methionine is bound by residues Gly76, Trp78, Asp99, Asp115, and Asp140. Catalysis depends on Lys180, which acts as the Proton acceptor.

This sequence belongs to the class I-like SAM-binding methyltransferase superfamily. RNA methyltransferase RlmE family.

The protein localises to the cytoplasm. It catalyses the reaction uridine(2552) in 23S rRNA + S-adenosyl-L-methionine = 2'-O-methyluridine(2552) in 23S rRNA + S-adenosyl-L-homocysteine + H(+). Specifically methylates the uridine in position 2552 of 23S rRNA at the 2'-O position of the ribose in the fully assembled 50S ribosomal subunit. This Rhodopseudomonas palustris (strain HaA2) protein is Ribosomal RNA large subunit methyltransferase E.